The primary structure comprises 539 residues: Acrosin-binding protein (539 aa).

A signal peptide spans Met1–Ala25. Positions Gln26–Phe106 are pro-ACR binding. The propeptide at Gln26–Arg269 is removed in active form. The interval Leu186 to Ser259 is disordered. Basic and acidic residues predominate over residues Gly192–Glu211. Residues Gly212–Leu238 are compositionally biased toward acidic residues. The tract at residues Leu315 to Arg423 is pro-ACR binding.

In terms of assembly, binds specifically to the 55- and 53-kDa proacrosins and the 49-kDa acrosin intermediate, but is not capable of binding 43-kDa acrosin intermediate and 32-kDa mature acrosin. The N-terminus is blocked. In terms of processing, synthesized as a 60-kDa precursor, the 35-kDa mature form is post-translationally produced by the removal of the N-terminal half of the precursor during sperm maturation in the testis and/or epididymis. Post-translationally, phosphorylated on Tyr residues in capacitated sperm. In terms of tissue distribution, specifically expressed in testis.

The protein resides in the secreted. It localises to the cytoplasmic vesicle. It is found in the secretory vesicle. Its subcellular location is the acrosome. Functionally, acrosomal protein that maintains proacrosin (pro-ACR) as an enzymatically inactive zymogen in the acrosome. Involved also in the acrosome formation. The chain is Acrosin-binding protein from Sus scrofa (Pig).